The primary structure comprises 186 residues: Acetyltransferase PA5475 (186 aa).

Positions Val-31–Leu-186 constitute an N-acetyltransferase domain. Residues Val-117–Ile-119, Gly-125, Asn-156, and Asp-161–Cys-163 contribute to the CoA site.

Functionally, catalyzes the transfer of an acetyl group from acetyl coenzyme A (AcCoA) to an acceptor substrate and releases both CoA and the acetylated product. It prefers the antibiotic chloramphenicol. In Pseudomonas aeruginosa (strain ATCC 15692 / DSM 22644 / CIP 104116 / JCM 14847 / LMG 12228 / 1C / PRS 101 / PAO1), this protein is Acetyltransferase PA5475.